The chain runs to 267 residues: Glutamate 5-kinase (267 aa).

Residue lysine 14 coordinates ATP. Positions 54, 141, and 157 each coordinate substrate. ATP contacts are provided by residues 177–178 (SD) and 219–225 (TGGMMSK).

Belongs to the glutamate 5-kinase family.

It localises to the cytoplasm. The catalysed reaction is L-glutamate + ATP = L-glutamyl 5-phosphate + ADP. Its pathway is amino-acid biosynthesis; L-proline biosynthesis; L-glutamate 5-semialdehyde from L-glutamate: step 1/2. Functionally, catalyzes the transfer of a phosphate group to glutamate to form L-glutamate 5-phosphate. This Streptococcus thermophilus (strain CNRZ 1066) protein is Glutamate 5-kinase.